Consider the following 301-residue polypeptide: Small ribosomal subunit protein uS2 (301 aa).

This sequence belongs to the universal ribosomal protein uS2 family. In terms of assembly, component of the small ribosomal subunit. Mature ribosomes consist of a small (40S) and a large (60S) subunit. The 40S subunit contains about 33 different proteins and 1 molecule of RNA (18S). The 60S subunit contains about 49 different proteins and 3 molecules of RNA (28S, 5.8S and 5S). Interacts with ribosomal protein S21.

It localises to the cytoplasm. Required for the assembly and/or stability of the 40S ribosomal subunit. Required for the processing of the 20S rRNA-precursor to mature 18S rRNA in a late step of the maturation of 40S ribosomal subunits. The sequence is that of Small ribosomal subunit protein uS2 from Brugia malayi (Filarial nematode worm).